A 604-amino-acid chain; its full sequence is Elongation factor 4 (604 aa).

Residues 7–189 (SRLRNFCIIA…AVVDRIPPPA (183 aa)) form the tr-type G domain. GTP-binding positions include 19 to 24 (DHGKST) and 136 to 139 (NKID).

The protein belongs to the TRAFAC class translation factor GTPase superfamily. Classic translation factor GTPase family. LepA subfamily.

It is found in the cell inner membrane. It carries out the reaction GTP + H2O = GDP + phosphate + H(+). Required for accurate and efficient protein synthesis under certain stress conditions. May act as a fidelity factor of the translation reaction, by catalyzing a one-codon backward translocation of tRNAs on improperly translocated ribosomes. Back-translocation proceeds from a post-translocation (POST) complex to a pre-translocation (PRE) complex, thus giving elongation factor G a second chance to translocate the tRNAs correctly. Binds to ribosomes in a GTP-dependent manner. The protein is Elongation factor 4 of Prochlorococcus marinus (strain MIT 9313).